Consider the following 67-residue polypeptide: Conotoxin VnMMSK-03 (67 aa).

Residues 1-20 form the signal peptide; it reads MMSKLGVVLTICLLPFPLTA. Residues 21 to 50 constitute a propeptide that is removed on maturation; sequence LPMDGDQPADLPALRTQDFEPERSPWFDPV. Disulfide bonds link C53-C65, C54-C61, and C58-C64. At P63 the chain carries 4-hydroxyproline.

The protein belongs to the conotoxin M superfamily. As to expression, expressed by the venom duct.

The protein localises to the secreted. The protein is Conotoxin VnMMSK-03 of Conus ventricosus (Mediterranean cone).